Reading from the N-terminus, the 415-residue chain is CTVILGFFIARTITKPITDMRNQTVEMSRGNYTQRVKIYGNDEIGELALAFNNLSKRVQEAQANTESEKRRLDSVITHMSDGIIATDRRGRIRIVNDMALKMLGMAKEDIIGYYMLSVLSLEDEFKLEEIQENNDSFLLDLNEEEGLIARVNFSTIVQETGFVTGYIAVLHDVTEQQQVERERREFVANVSHELRTPLTSMNSYIEALEEGAWKDEELAPQFLSVTREETERMIRLVNDLLQLSKMDNESDQINKEIIDFNMFINKIINRHEMSAKDTTFIRDIPKKTIFTEFDPDKMTQVFDNVITNAMKYSRGDKRVEFHVKQNPLYNRMTIRIKDNGIGIPINKVDKIFDRFYRVDKARTRKMGGTGLGLAISKEIVEAHNGRIWANSVEGQGTSIFITLPCEVIEDGDWDE.

Residues 11 to 63 enclose the HAMP domain; it reads RTITKPITDMRNQTVEMSRGNYTQRVKIYGNDEIGELALAFNNLSKRVQEAQA. The PAS domain maps to 68–138; the sequence is EKRRLDSVIT…EIQENNDSFL (71 aa). Zn(2+)-binding residues include histidine 78, aspartate 81, histidine 171, and glutamate 175. Residues 121 to 185 enclose the PAC domain; it reads LEDEFKLEEI…QQQVERERRE (65 aa). In terms of domain architecture, Histidine kinase spans 189–407; it reads NVSHELRTPL…SIFITLPCEV (219 aa). Histidine 192 bears the Phosphohistidine; by autocatalysis mark.

As to quaternary structure, forms homodimers. Forms homooligomers. NH4(+) serves as cofactor. Post-translationally, autophosphorylated.

Its subcellular location is the cell membrane. The catalysed reaction is ATP + protein L-histidine = ADP + protein N-phospho-L-histidine.. With respect to regulation, by zinc. Zinc-binding negatively regulates WalK kinase activity and thus autophosphorylation. In terms of biological role, member of the two-component regulatory system WalK/WalR that regulates genes involved in cell wall metabolism, virulence regulation, biofilm production, oxidative stress resistance and antibiotic resistance via direct or indirect regulation of autolysins. Functions as a sensor protein kinase which is autophosphorylated at a histidine residue in the dimerization domain and transfers its phosphate group to the conserved aspartic acid residue in the regulatory domain of WalR. In turn, WalR binds to the upstream promoter regions of the target genes to positively and negatively regulate their expression. This chain is Sensor protein kinase WalK (walK), found in Staphylococcus aureus.